A 350-amino-acid polypeptide reads, in one-letter code: Phosphotriesterase-related protein (350 aa).

Residues His22, His24, Glu169, His201, His230, and Asp298 each coordinate a divalent metal cation.

The protein belongs to the metallo-dependent hydrolases superfamily. Phosphotriesterase family. A divalent metal cation serves as cofactor.

The sequence is that of Phosphotriesterase-related protein from Drosophila grimshawi (Hawaiian fruit fly).